Consider the following 275-residue polypeptide: Lectin (275 aa).

Positions 1-30 (MASLQTQMISFYLIFLSILLTTIFFFKVNS) are cleaved as a signal peptide. Aspartate 111 and glycine 129 together coordinate D-glucose. Glutamate 149 and aspartate 151 together coordinate Mn(2+). Positions 151, 153, 155, and 159 each coordinate Ca(2+). Positions 159 and 166 each coordinate Mn(2+). The propeptide occupies 211 to 217 (NSLEEEN). 2 residues coordinate D-glucose: glycine 246 and alanine 247. Residues 270–275 (KQAADA) constitute a propeptide that is removed on maturation.

The protein belongs to the leguminous lectin family. Heterotetramer of two alpha and two beta chains. The mature form consists of two chains, alpha and beta, produced by cleavage of the immature protein. These remain cleaved, yet fold together to form one subunit.

Functionally, D-mannose specific lectin. This is Lectin from Lens culinaris (Lentil).